The following is a 76-amino-acid chain: Kappa-actitoxin-Avd4a (76 aa).

The first 19 residues, 1–19 (MNKALFLCLVVLCAAVVFA), serve as a signal peptide directing secretion. The propeptide occupies 20–31 (AEDLQKAKHAPF). 3 disulfide bridges follow: C37-C72, C39-C65, and C55-C73.

This sequence belongs to the sea anemone type 3 (BDS) potassium channel toxin family. Highly expressed in the ectodermal tissue from the distal and proximal tentacles, body wall, and oral disk.

Its subcellular location is the secreted. It is found in the nematocyst. Its function is as follows. Acts as a gating modifier on both Kv and Nav ion channels, and also acts on blood pressure. Voltage-dependently inhibits voltage-gated potassium channels Kv3 (Kv3.1/KCNC1, Kv3.2/KCNC2 and Kv3.4/KCNC4) and slows inactivation of the voltage-gated sodium channel Nav1.7/SCN9A. Inhibits all Kv3.1, Kv3.2 and Kv3.4 by about 50% when tested at a voltage of +40 mV (45%, 48% and 56%, respectively). May act by binding residues in voltage-sensing domains S3b and S4 of Kv3. On sodium channels, tests have been done on human Nav1.7/SCN9A (expressed in HEK293 cells) (EC(50)=3 nM) and rat SCG neurons that mostly carry Nav1.7 channels (EC(50)=300 nM). This toxin also reduces blood pressure. This Anemonia viridis (Snakelocks anemone) protein is Kappa-actitoxin-Avd4a.